A 201-amino-acid polypeptide reads, in one-letter code: MDVKACYQNAKALLEGHFLLSSGFHSNYYLQSAKVLENPKLAEQLALELAKQIQNARLNIECVCSPAIGGILAGYELARALGVRFIFTERVNGVMALRRGFEVKPNEKILVCEDIITTGKSAMECAKVLEEKGAHIVAFAALANRGICKRTHSSLKAQEDACLPSELPLFALEDFVFDMHEPKHCPLCTTSVAIKPGSRGN.

113–121 is a binding site for 5-phospho-alpha-D-ribose 1-diphosphate; the sequence is EDIITTGKS. Positions 117 and 145 each coordinate orotate.

Belongs to the purine/pyrimidine phosphoribosyltransferase family. PyrE subfamily. Homodimer. Mg(2+) is required as a cofactor.

The enzyme catalyses orotidine 5'-phosphate + diphosphate = orotate + 5-phospho-alpha-D-ribose 1-diphosphate. It functions in the pathway pyrimidine metabolism; UMP biosynthesis via de novo pathway; UMP from orotate: step 1/2. In terms of biological role, catalyzes the transfer of a ribosyl phosphate group from 5-phosphoribose 1-diphosphate to orotate, leading to the formation of orotidine monophosphate (OMP). This Helicobacter acinonychis (strain Sheeba) protein is Orotate phosphoribosyltransferase.